A 44-amino-acid chain; its full sequence is Protein PsbN (44 aa).

Residues 6 to 26 (FFFTIFVWFLLISVTGYSIYV) traverse the membrane as a helical segment.

Belongs to the PsbN family.

It localises to the plastid. Its subcellular location is the chloroplast thylakoid membrane. Functionally, may play a role in photosystem I and II biogenesis. This chain is Protein PsbN, found in Bigelowiella natans (Pedinomonas minutissima).